Reading from the N-terminus, the 489-residue chain is uncharacterized protein (489 aa).

4 disordered regions span residues 1–94, 109–229, 300–389, and 428–461; these read MIEE…GSLD, NRNQ…SDDD, DDNI…TSIQ, and SESG…TLVK. 2 stretches are compositionally biased toward low complexity: residues 43–53 and 64–77; these read LLVQQSNQSVK and SNGF…NIHD. Over residues 121–138 the composition is skewed to acidic residues; that stretch reads NFSEDDEDDDAEDDDSSD. The span at 144-154 shows a compositional bias: basic residues; it reads KKNKPKKPSKL. Basic and acidic residues predominate over residues 155 to 164; the sequence is MKHDSVDGKN. A compositionally biased stretch (basic residues) spans 173-199; sequence SKKKVQHQLKEKNKKKGIKNDKKKSKP. The span at 308–343 shows a compositional bias: acidic residues; that stretch reads NDNDNDNDDDNDNDNDNDNDNDNDNDDDENGEDNGE. Composition is skewed to low complexity over residues 344–389 and 433–449; these read DLNI…TSIQ and SISS…SSKS.

This is an uncharacterized protein from Dictyostelium discoideum (Social amoeba).